The sequence spans 283 residues: Alpha-ketoglutarate-dependent taurine dioxygenase (283 aa).

Taurine is bound by residues histidine 70, tyrosine 73, and asparagine 95. The Fe cation site is built by histidine 99 and aspartate 101. Valine 102 provides a ligand contact to taurine. Threonine 126 provides a ligand contact to 2-oxoglutarate. Tryptophan 128, tryptophan 240, and tryptophan 248 each carry 3-hydroxytryptophan; by autocatalysis. Residue histidine 255 coordinates Fe cation. Residues histidine 255, arginine 266, and arginine 270 each contribute to the 2-oxoglutarate site. A taurine-binding site is contributed by arginine 270.

The protein belongs to the TfdA dioxygenase family. In terms of assembly, homodimer. Was later shown to be a homotetramer arranged as a dimer of two dimers. Fe(2+) serves as cofactor.

The enzyme catalyses taurine + 2-oxoglutarate + O2 = aminoacetaldehyde + sulfite + succinate + CO2 + H(+). It participates in organosulfur degradation; taurine degradation via aerobic pathway; aminoacetaldehyde and sulfite from taurine: step 1/1. Its activity is regulated as follows. Activated by ascorbate and inhibited by divalent metal ions such as zinc, copper and cobalt. Catalyzes the alpha-ketoglutarate-dependent hydroxylation of taurine yielding sulfite and aminoacetaldehyde after decomposition of an unstable intermediate. Is required for the utilization of taurine (2-aminoethanesulfonate) as an alternative sulfur source for growth in the absence of sulfate. To a lesser extent, pentanesulfonate, 3-(N-morpholino)propanesulfonate and 1,3-dioxo-2-isoindolineethanesulfonate are also desulfonated by this enzyme in vitro; however, desulfonation by TauD of organosulfonates other than taurine seem to be of little or no importance for sulfur metabolism in vivo. The sequence is that of Alpha-ketoglutarate-dependent taurine dioxygenase (tauD) from Escherichia coli (strain K12).